The primary structure comprises 292 residues: NAD kinase (292 aa).

The active-site Proton acceptor is the D73. NAD(+) is bound by residues 73–74 (DG), 147–148 (NE), H158, R175, D177, 188–193 (TAYSLS), and Q247.

The protein belongs to the NAD kinase family. A divalent metal cation serves as cofactor.

It localises to the cytoplasm. It carries out the reaction NAD(+) + ATP = ADP + NADP(+) + H(+). Functionally, involved in the regulation of the intracellular balance of NAD and NADP, and is a key enzyme in the biosynthesis of NADP. Catalyzes specifically the phosphorylation on 2'-hydroxyl of the adenosine moiety of NAD to yield NADP. This Escherichia coli (strain UTI89 / UPEC) protein is NAD kinase.